The primary structure comprises 64 residues: Alpha-conotoxin GI (64 aa).

A signal peptide spans 1 to 21; sequence MGMRMMFTVFLLVVLATTVVS. The propeptide occupies 22–49; the sequence is FPSERASDGRDDTAKDEGSDMDKLVEKK. Disulfide bonds link Cys-51–Cys-56 and Cys-52–Cys-62. Cys-62 is modified (cysteine amide).

Belongs to the conotoxin A superfamily. Post-translationally, not hydroxylated; hydroxylation, on a synthetic hydroxylated GI, improves its folding but impairs its activity against target receptors. As to expression, expressed by the venom duct.

It is found in the secreted. In terms of biological role, alpha-conotoxins act on postsynaptic membranes, they bind to the nicotinic acetylcholine receptors (nAChR) and thus inhibit them. Reversibly inhibits mammalian muscle nAChR (IC(50)=339 nM on adult subtype (alpha-1-beta-1-gamma-delta/CHRNA1-CHRNB1-CHRNG-CHRND) and IC(50)=5.86-995 nM on fetal subtype (alpha-1-beta-1-delta-epsilon/CHRNA1-CHRNB1-CHRND-CHRNE)). The higher affinity site is the alpha/delta site on mouse muscle-derived BC3H-1 receptor, and the other site (alpha/gamma site) on nicotinic receptors from Torpedo californica electric organ. The chain is Alpha-conotoxin GI from Conus geographus (Geography cone).